Consider the following 285-residue polypeptide: D-apionate oxidoisomerase (285 aa).

Residues glycine 15 to methionine 17, glutamate 36, and aspartate 71 each bind NAD(+). Zn(2+)-binding residues include histidine 116 and glutamate 186.

Belongs to the ApnO family. Zn(2+) serves as cofactor.

It carries out the reaction D-apionate + NAD(+) = 3-oxoisoapionate + NADH + H(+). The protein operates within carbohydrate metabolism. Its function is as follows. Involved in catabolism of D-apiose. Catalyzes the conversion of D-apionate to 3-oxo-isoapionate. The sequence is that of D-apionate oxidoisomerase from Pectobacterium atrosepticum (strain SCRI 1043 / ATCC BAA-672) (Erwinia carotovora subsp. atroseptica).